The sequence spans 714 residues: Mitochondrial potassium channel ATP-binding subunit (714 aa).

The transit peptide at 1–25 (MLVHLFRVGIRGGPVPRWSLQSLRF) directs the protein to the mitochondrion. Transmembrane regions (helical) follow at residues 127–147 (LLAL…NVQI), 178–198 (IQLL…LVLL), 278–298 (LMLA…GSGL), and 365–385 (NIAF…LVAG). One can recognise an ABC transmembrane type-1 domain in the interval 132–419 (LAIVLALGAA…LSVLFGQVVR (288 aa)). The ABC transporter domain maps to 454-691 (ITFQNVSFSY…GGLYAELIRR (238 aa)). An ATP-binding site is contributed by 489–496 (GQSGGGKT).

This sequence belongs to the ABC transporter superfamily. ABCB family. Multidrug resistance exporter (TC 3.A.1.201) subfamily. In terms of assembly, the mitochondrial potassium channel (mitoK(ATP)) is composed of 4 subunits of CCDC51/MITOK and 4 subunits of ABCB8/MITOSUR. Physically interacts with PAAT. Interacts with Neuropilin-1 (NRP1) in mitochondria. Strong expression is found in the heart, brain and testis. In the testis, expressed both in the somatic Sertoli cells and peritubular cells and in the germline (spermatogonia and pachytene spermatocytes). Also expressed in the lung, liver, intestine and kidney.

The protein localises to the mitochondrion inner membrane. With respect to regulation, channel activity inhibited by ATP via ABCB8/MITOSUR subunit. Its function is as follows. ATP-binding subunit of the mitochondrial ATP-gated potassium channel (mitoK(ATP)). v. An increase in ATP intracellular levels closes the channel, inhibiting K(+) transport, whereas a decrease in ATP levels enhances K(+) uptake in the mitochondrial matrix. Plays a role in mitochondrial iron transport. Required for maintenance of normal cardiac function, possibly by influencing mitochondrial iron export and regulating the maturation of cytosolic iron sulfur cluster-containing enzymes. The chain is Mitochondrial potassium channel ATP-binding subunit from Rattus norvegicus (Rat).